The chain runs to 239 residues: Pentatricopeptide repeat-containing protein DWY1, chloroplastic (239 aa).

Residues 1 to 35 (MALEAAFSMSFCSFSVPKAIFCERETSSFQRITSR) constitute a chloroplast transit peptide. Disordered regions lie at residues 40-59 (AGES…KETS) and 101-122 (HISP…SGGE). Over residues 111 to 122 (VRGDKPEISGGE) the composition is skewed to basic and acidic residues. Positions 113–144 (GDKPEISGGEKKAIVDRSKAYVKLKSLGKEVR) are type E(+) motif. Residues 145–239 (DAGYVPETKY…DGNCSCGDYW (95 aa)) are type DYW motif.

The protein belongs to the PPR family. PCMP-H subfamily. In terms of assembly, interacts with CRR4. Zn(2+) serves as cofactor.

It is found in the plastid. Its subcellular location is the chloroplast. Its function is as follows. Plays a major role in single RNA editing events in chloroplasts. Acts as a site-recognition transacting factor involved in the edition of the site 1 of ndhD (ndhD-1 site corresponding to cytidine-2), which is a plastid-encoded subunit of the NADH-plastoquinone oxidoreductase. The interaction with CRR4 is required for its function in editing the ndhD-1 site. This Arabidopsis thaliana (Mouse-ear cress) protein is Pentatricopeptide repeat-containing protein DWY1, chloroplastic.